The primary structure comprises 193 residues: Peptidyl-tRNA hydrolase (193 aa).

TRNA is bound at residue Tyr17. The active-site Proton acceptor is the His22. TRNA contacts are provided by Tyr69, Asn71, and Asn117.

The protein belongs to the PTH family. As to quaternary structure, monomer.

It localises to the cytoplasm. It carries out the reaction an N-acyl-L-alpha-aminoacyl-tRNA + H2O = an N-acyl-L-amino acid + a tRNA + H(+). Its function is as follows. Hydrolyzes ribosome-free peptidyl-tRNAs (with 1 or more amino acids incorporated), which drop off the ribosome during protein synthesis, or as a result of ribosome stalling. Functionally, catalyzes the release of premature peptidyl moieties from peptidyl-tRNA molecules trapped in stalled 50S ribosomal subunits, and thus maintains levels of free tRNAs and 50S ribosomes. The polypeptide is Peptidyl-tRNA hydrolase (Leifsonia xyli subsp. xyli (strain CTCB07)).